A 581-amino-acid polypeptide reads, in one-letter code: ATP-dependent lipid A-core flippase (581 aa).

5 helical membrane-spanning segments follow: residues 15–35, 62–82, 152–172, 252–272, and 274–294; these read LWPI…ALII, ISIW…SSGF, IIGL…VLII, IIIQ…SSLP, and IIDE…IALM. An ABC transmembrane type-1 domain is found at 27 to 309; that stretch reads IISIVALIIN…LTNVNANFQK (283 aa). The ABC transporter domain occupies 341 to 577; it reads IKFKNITFTY…KGVYAQIYRL (237 aa). 375–382 serves as a coordination point for ATP; it reads GSSGAGKS.

It belongs to the ABC transporter superfamily. Lipid exporter (TC 3.A.1.106) family. Homodimer.

It localises to the cell membrane. The enzyme catalyses ATP + H2O + lipid A-core oligosaccharideSide 1 = ADP + phosphate + lipid A-core oligosaccharideSide 2.. In terms of biological role, involved in lipopolysaccharide (LPS) biosynthesis. Translocates lipid A-core from the inner to the outer leaflet of the inner membrane. Transmembrane domains (TMD) form a pore in the inner membrane and the ATP-binding domain (NBD) is responsible for energy generation. The polypeptide is ATP-dependent lipid A-core flippase (Wigglesworthia glossinidia brevipalpis).